The sequence spans 149 residues: Nucleoside diphosphate kinase (149 aa).

Residues K9, F57, R85, T91, R102, and N112 each coordinate ATP. Catalysis depends on H115, which acts as the Pros-phosphohistidine intermediate.

The protein belongs to the NDK family. As to quaternary structure, homotetramer. Mg(2+) serves as cofactor.

The protein localises to the cytoplasm. It catalyses the reaction a 2'-deoxyribonucleoside 5'-diphosphate + ATP = a 2'-deoxyribonucleoside 5'-triphosphate + ADP. It carries out the reaction a ribonucleoside 5'-diphosphate + ATP = a ribonucleoside 5'-triphosphate + ADP. In terms of biological role, major role in the synthesis of nucleoside triphosphates other than ATP. The ATP gamma phosphate is transferred to the NDP beta phosphate via a ping-pong mechanism, using a phosphorylated active-site intermediate. The sequence is that of Nucleoside diphosphate kinase from Cyanothece sp. (strain PCC 7425 / ATCC 29141).